The primary structure comprises 504 residues: Histidine ammonia-lyase (504 aa).

The segment at residues 142-144 (ASG) is a cross-link (5-imidazolinone (Ala-Gly)). Residue serine 143 is modified to 2,3-didehydroalanine (Ser).

Belongs to the PAL/histidase family. Post-translationally, contains an active site 4-methylidene-imidazol-5-one (MIO), which is formed autocatalytically by cyclization and dehydration of residues Ala-Ser-Gly.

Its subcellular location is the cytoplasm. The catalysed reaction is L-histidine = trans-urocanate + NH4(+). It participates in amino-acid degradation; L-histidine degradation into L-glutamate; N-formimidoyl-L-glutamate from L-histidine: step 1/3. In Staphylococcus aureus (strain JH1), this protein is Histidine ammonia-lyase.